Consider the following 469-residue polypeptide: UDP-N-acetylmuramoylalanine--D-glutamate ligase (469 aa).

123 to 129 lines the ATP pocket; the sequence is GTNGKST.

Belongs to the MurCDEF family.

Its subcellular location is the cytoplasm. It catalyses the reaction UDP-N-acetyl-alpha-D-muramoyl-L-alanine + D-glutamate + ATP = UDP-N-acetyl-alpha-D-muramoyl-L-alanyl-D-glutamate + ADP + phosphate + H(+). It participates in cell wall biogenesis; peptidoglycan biosynthesis. In terms of biological role, cell wall formation. Catalyzes the addition of glutamate to the nucleotide precursor UDP-N-acetylmuramoyl-L-alanine (UMA). In Caulobacter sp. (strain K31), this protein is UDP-N-acetylmuramoylalanine--D-glutamate ligase.